The chain runs to 308 residues: F-actin-capping protein subunit alpha (308 aa).

This sequence belongs to the F-actin-capping protein alpha subunit family. Component of the F-actin capping complex, composed of a heterodimer of an alpha and a beta subunit.

Its function is as follows. F-actin-capping proteins bind in a Ca(2+)-independent manner to the fast growing ends of actin filaments (barbed end) thereby blocking the exchange of subunits at these ends. Unlike other capping proteins (such as gelsolin and severin), these proteins do not sever actin filaments. In Arabidopsis thaliana (Mouse-ear cress), this protein is F-actin-capping protein subunit alpha.